A 794-amino-acid polypeptide reads, in one-letter code: Solute carrier family 26 member 9 (794 aa).

Residues M1–N70 are Cytoplasmic-facing. Residues L71 to A96 traverse the membrane as a helical segment. Over N97 to P100 the chain is Extracellular. The helical transmembrane segment at V101 to F109 threads the bilayer. At P110–A129 the chain is on the cytoplasmic side. A helical transmembrane segment spans residues V130–L142. Topologically, residues A143–I160 are extracellular. A helical membrane pass occupies residues E161–Q189. Residues F190–E199 are Cytoplasmic-facing. Residues S200–F222 form a helical membrane-spanning segment. At G223–I235 the chain is on the extracellular side. The segment at residues I236–K244 is an intramembrane region (helical). At E245–A252 the chain is on the extracellular side. A helical transmembrane segment spans residues S253–K273. Over F274 to M284 the chain is Cytoplasmic. A helical membrane pass occupies residues E285–G297. Residues S298 to V332 are Extracellular-facing. Residues G333–K356 traverse the membrane as a helical segment. At H357–A363 the chain is on the cytoplasmic side. Residues N364 to G377 traverse the membrane as a helical segment. The Extracellular portion of the chain corresponds to S378 to A388. Residues L389–A398 form a helical membrane-spanning segment. Topologically, residues G399–Q403 are cytoplasmic. Residues I404–I417 traverse the membrane as a helical segment. Residues L418 to K429 are Extracellular-facing. The chain crosses the membrane as a helical span at residues S430–K455. The Cytoplasmic segment spans residues K456–L459. A helical membrane pass occupies residues D460 to L474. At G475–P477 the chain is on the extracellular side. Residues Y478–Q496 traverse the membrane as a helical segment. Residues F497–L794 lie on the Cytoplasmic side of the membrane. The STAS domain occupies V517 to A739.

It belongs to the SLC26A/SulP transporter (TC 2.A.53) family. As to quaternary structure, homodimer.

The protein resides in the cell membrane. Its subcellular location is the endomembrane system. It catalyses the reaction chloride(in) = chloride(out). It carries out the reaction hydrogencarbonate(in) + chloride(out) = hydrogencarbonate(out) + chloride(in). Its activity is regulated as follows. Inhibited by ammonium and thiosulfate. Ion transporter that can act both as an ion channel and anion exchanger. Mainly acts as a chloride channel, which mediate uncoupled chloride anion transport in an alternate-access mechanism where a saturable binding site is alternately exposed to either one or the other side of the membrane. Also acts as a DIDS- and thiosulfate- sensitive anion exchanger the exchange of chloride for bicarbonate ions across the cell membrane. This is Solute carrier family 26 member 9 (slc26a9) from Xenopus tropicalis (Western clawed frog).